We begin with the raw amino-acid sequence, 230 residues long: dITP/XTP pyrophosphatase (230 aa).

Residue 7 to 12 participates in substrate binding; that stretch reads STNPGK. Mg(2+) is bound by residues Glu41 and Asp70. Asp70 functions as the Proton acceptor in the catalytic mechanism. Residues Ser71, 181 to 184, Lys205, and 210 to 211 contribute to the substrate site; these read FGYD and HR.

Belongs to the HAM1 NTPase family. In terms of assembly, homodimer. It depends on Mg(2+) as a cofactor.

It carries out the reaction XTP + H2O = XMP + diphosphate + H(+). The enzyme catalyses dITP + H2O = dIMP + diphosphate + H(+). The catalysed reaction is ITP + H2O = IMP + diphosphate + H(+). In terms of biological role, pyrophosphatase that catalyzes the hydrolysis of nucleoside triphosphates to their monophosphate derivatives, with a high preference for the non-canonical purine nucleotides XTP (xanthosine triphosphate), dITP (deoxyinosine triphosphate) and ITP. Seems to function as a house-cleaning enzyme that removes non-canonical purine nucleotides from the nucleotide pool, thus preventing their incorporation into DNA/RNA and avoiding chromosomal lesions. This Anaeromyxobacter sp. (strain Fw109-5) protein is dITP/XTP pyrophosphatase.